We begin with the raw amino-acid sequence, 501 residues long: Isoflavone 3'-hydroxylase (501 aa).

The helical transmembrane segment at 7–24 (LLSLSFIITIKILLKITS) threads the bilayer. Cysteine 439 contacts heme.

Belongs to the cytochrome P450 family. The cofactor is heme. In terms of tissue distribution, expressed constitutively in leaves and stems, but not in roots.

It is found in the endoplasmic reticulum membrane. It carries out the reaction formononetin + reduced [NADPH--hemoprotein reductase] + O2 = calycosin + oxidized [NADPH--hemoprotein reductase] + H2O + H(+). Its function is as follows. Involved in the biosynthesis of the pterocarpin phytoalexins. Acts on isoflavones with a 4'-methoxy group on the B-ring, such as biochanin A, formononetin and 2'-hydroxyformononetin. Has a low activity with daidzein and pseudobaptigenin, and no activity with the 7-O-methylated isoflavonoids isoformononetin and prunetin. In Medicago truncatula (Barrel medic), this protein is Isoflavone 3'-hydroxylase.